We begin with the raw amino-acid sequence, 123 residues long: uncharacterized protein (123 aa).

Thr-56 is subject to Phosphothreonine. Ser-73, Ser-87, Ser-97, Ser-113, and Ser-119 each carry phosphoserine.

As to expression, highly expressed in the kidney (at protein level).

It is found in the cytoplasm. This is an uncharacterized protein from Felis catus (Cat).